We begin with the raw amino-acid sequence, 568 residues long: Phosphoribosylaminoimidazole carboxylase (568 aa).

The region spanning 110–298 (KNHLIKHDVA…QFEAHVRAVT (189 aa)) is the ATP-grasp domain. 138–193 (GEKFGYPYMLKSRTLAYDGRGNFVVKDKSYCEKALEFLKDRPLYAEKWCPFTKELA) lines the ATP pocket.

It in the C-terminal section; belongs to the AIR carboxylase family. Class I subfamily.

The enzyme catalyses 5-amino-1-(5-phospho-D-ribosyl)imidazole-4-carboxylate + H(+) = 5-amino-1-(5-phospho-beta-D-ribosyl)imidazole + CO2. Its pathway is purine metabolism; IMP biosynthesis via de novo pathway; 5-amino-1-(5-phospho-D-ribosyl)imidazole-4-carboxylate from 5-amino-1-(5-phospho-D-ribosyl)imidazole (carboxylase route): step 1/1. The polypeptide is Phosphoribosylaminoimidazole carboxylase (ADE2) (Candida albicans (strain SC5314 / ATCC MYA-2876) (Yeast)).